Here is a 261-residue protein sequence, read N- to C-terminus: Enolase-phosphatase E1 (261 aa).

Mg(2+) is bound by residues D16 and E18. Residues 150 to 151 and K184 each bind substrate; that span reads SS. D209 serves as a coordination point for Mg(2+).

Belongs to the HAD-like hydrolase superfamily. MasA/MtnC family. Monomer. Mg(2+) is required as a cofactor.

The protein localises to the cytoplasm. Its subcellular location is the nucleus. It catalyses the reaction 5-methylsulfanyl-2,3-dioxopentyl phosphate + H2O = 1,2-dihydroxy-5-(methylsulfanyl)pent-1-en-3-one + phosphate. It functions in the pathway amino-acid biosynthesis; L-methionine biosynthesis via salvage pathway; L-methionine from S-methyl-5-thio-alpha-D-ribose 1-phosphate: step 3/6. It participates in amino-acid biosynthesis; L-methionine biosynthesis via salvage pathway; L-methionine from S-methyl-5-thio-alpha-D-ribose 1-phosphate: step 4/6. Its function is as follows. Bifunctional enzyme that catalyzes the enolization of 2,3-diketo-5-methylthiopentyl-1-phosphate (DK-MTP-1-P) into the intermediate 2-hydroxy-3-keto-5-methylthiopentenyl-1-phosphate (HK-MTPenyl-1-P), which is then dephosphorylated to form the acireductone 1,2-dihydroxy-3-keto-5-methylthiopentene (DHK-MTPene). The protein is Enolase-phosphatase E1 (Enoph1) of Rattus norvegicus (Rat).